The primary structure comprises 485 residues: Bindin (485 aa).

The first 20 residues, 1-20, serve as a signal peptide directing secretion; the sequence is MGFHQISVIIVVLALASARA. Positions 21 to 247 are excised as a propeptide; it reads ADEFPSHTDT…DSERGARKKR (227 aa). 3 disordered regions span residues 157–195, 219–273, and 305–331; these read GETRKRRGADDNDGDDVSKRASPRKGDEPAGHKLKDLAP, ISGH…PAQQ, and GGGQFGAFSPGEAEADNADYDEYSDSL. The segment covering 172 to 192 has biased composition (basic and acidic residues); that stretch reads DVSKRASPRKGDEPAGHKLKD. Positions 250–264 are enriched in polar residues; the sequence is NQGNYPQAMNPQSRG. The segment covering 317–331 has biased composition (acidic residues); that stretch reads AEADNADYDEYSDSL. The tract at residues 371-379 is fucose-binding domain; sequence LRHLRHHSN. The disordered stretch occupies residues 459-485; sequence QQGMGGVPQRMGGQPQGNAYNQGYRQG. Low complexity predominate over residues 465–475; it reads VPQRMGGQPQG. A compositionally biased stretch (polar residues) spans 476–485; the sequence is NAYNQGYRQG.

The protein belongs to the bindin family.

It is found in the cytoplasmic vesicle. The protein localises to the secretory vesicle. It localises to the acrosome lumen. Functionally, species-specific sea urchin sperm protein required for adhesion of sperm to the egg surface during fertilization. Bindin coats the acrosomal process after it is externalized by the acrosome reaction. It binds to sulfated, fucose-containing polysaccharides on the vitelline layer receptor proteoglycans which cover the egg plasma membrane. The protein is Bindin of Mesocentrotus franciscanus (Giant red sea urchin).